The following is a 343-amino-acid chain: Anthranilate phosphoribosyltransferase (343 aa).

Residues Gly-84, 87–88 (GD), Thr-92, 94–97 (NIST), 112–120 (KHGNRGVSS), and Ser-124 each bind 5-phospho-alpha-D-ribose 1-diphosphate. Position 84 (Gly-84) interacts with anthranilate. Position 96 (Ser-96) interacts with Mg(2+). Asn-115 lines the anthranilate pocket. Position 170 (Arg-170) interacts with anthranilate. Mg(2+) contacts are provided by Asp-229 and Glu-230.

Belongs to the anthranilate phosphoribosyltransferase family. Homodimer. The cofactor is Mg(2+).

It catalyses the reaction N-(5-phospho-beta-D-ribosyl)anthranilate + diphosphate = 5-phospho-alpha-D-ribose 1-diphosphate + anthranilate. The protein operates within amino-acid biosynthesis; L-tryptophan biosynthesis; L-tryptophan from chorismate: step 2/5. Functionally, catalyzes the transfer of the phosphoribosyl group of 5-phosphorylribose-1-pyrophosphate (PRPP) to anthranilate to yield N-(5'-phosphoribosyl)-anthranilate (PRA). The polypeptide is Anthranilate phosphoribosyltransferase (Burkholderia ambifaria (strain MC40-6)).